A 1321-amino-acid polypeptide reads, in one-letter code: Insulin receptor substrate 2 (1321 aa).

Residues 1 to 10 show a composition bias toward pro residues; the sequence is MASAPLPGPP. 2 disordered regions span residues 1-32 and 51-73; these read MASA…HSVR and RGPG…PPRL. Residues 16 to 144 form the PH domain; that stretch reads DGPNLNNNNN…WYRALTDLVS (129 aa). Over residues 18-28 the composition is skewed to low complexity; sequence PNLNNNNNNNN. Residues 191 to 295 form the IRS-type PTB domain; the sequence is YREVWQVNLK…EAMKALKELF (105 aa). The interval 299–536 is disordered; the sequence is PRSKSQSSGS…ARDGSGGELY (238 aa). S303 and S343 each carry phosphoserine. At T347 the chain carries Phosphothreonine. At S362 the chain carries Phosphoserine. Gly residues predominate over residues 364–376; the sequence is GDGGAAGGAGTAG. Phosphoserine occurs at positions 381, 385, and 388. R409 bears the Omega-N-methylarginine mark. 2 stretches are compositionally biased toward low complexity: residues 435-456 and 478-490; these read SPPA…SGSY and PSSG…GSPS. Position 517 is a phosphothreonine (T517). Residue S520 is modified to Phosphoserine. A Phosphothreonine modification is found at T524. Y536 carries the phosphotyrosine; by INSR modification. The short motif at 536–539 is the YXXM motif 1 element; the sequence is YGYM. Position 556 is a phosphoserine; by PLK1 (S556). Phosphoserine is present on S573. Phosphothreonine occurs at positions 575 and 576. S590 carries the post-translational modification Phosphoserine. The short motif at 594-597 is the YXXM motif 2 element; it reads YTLM. S604 and S616 each carry phosphoserine. Y649 is modified (phosphotyrosine). 2 short sequence motifs (YXXM motif) span residues 649–652 and 671–674; these read YMPM. Y671 carries the post-translational modification Phosphotyrosine; by INSR. S675, S678, S727, and S728 each carry phosphoserine. The YXXM motif 5 signature appears at 734–737; that stretch reads YMRM. Phosphoserine is present on S762. At T771 the chain carries Phosphothreonine. Residue S796 is modified to Phosphoserine. A YXXM motif 6 motif is present at residues 814 to 817; that stretch reads YVLM. S819 bears the Phosphoserine mark. Disordered regions lie at residues 834–871 and 888–1091; these read ATPG…RPEG and EGLQ…ASPT. Position 907 is a phosphoserine (S907). Phosphotyrosine; by INSR is present on Y911. The span at 930–959 shows a compositional bias: low complexity; that stretch reads LLASAASSSSLLSASSPASSLGSGTPGTSS. S965 is modified (phosphoserine). Y970 is modified (phosphotyrosine; by INSR). The segment covering 1005-1014 has biased composition (pro residues); that stretch reads PYPPLPPRPS. Over residues 1039–1055 the composition is skewed to polar residues; sequence AATSQGPTAGSSMSSEP. Residues 1061-1064 carry the YXXM motif 7 motif; the sequence is YTEM. T1071 carries the phosphothreonine modification. Positions 1072–1082 are enriched in pro residues; it reads PPQPIVAPPKP. Position 1089 is a phosphoserine (S1089). S1098 carries the post-translational modification Phosphoserine; by PLK1. Residues 1110–1198 form a disordered region; it reads LQVSQPPDPH…TSPGQAQPLV (89 aa). A compositionally biased stretch (low complexity) spans 1139 to 1154; that stretch reads ETFSSTTTVTPVSPSF. T1148 carries the phosphothreonine modification. A phosphoserine mark is found at S1151, S1163, S1165, S1175, and S1190. Over residues 1163–1179 the composition is skewed to polar residues; sequence SASVENVSLRKSSEGSS. At Y1242 the chain carries Phosphotyrosine; by INSR. The tract at residues 1251–1275 is disordered; it reads QGSLAQSQPQPGDKNSWSRTRSLGG. A compositionally biased stretch (polar residues) spans 1253 to 1271; the sequence is SLAQSQPQPGDKNSWSRTR. Y1303 is modified (phosphotyrosine; by INSR). Residue K1314 forms a Glycyl lysine isopeptide (Lys-Gly) (interchain with G-Cter in ubiquitin) linkage.

As to quaternary structure, interacts with PHIP. Interacts with SH2B1; this interaction enhances leptin-induced activation of the PI3-kinase pathway. Interacts with GRB2. Interacts with PIK3R1. Interacts with DVL2; this interaction promotes the Wnt/beta-catenin signaling pathway. Phosphorylation fluctuates in a cell-cycle dependent manner with hyperphosphorylation during mitosis. Phosphorylated at Ser-556 and Ser-1098 by PLK1; these phosphorylations prevent the activation of the PI3K pathway upon growth factor stimulation by inhibiting the binding between IRS2 and the PI3K pathway components and increasing the level of IRS2 protein degradation. In addition, they prevent premature mitotic exit. Post-translationally, monoubiquitinated by NEDD4; leading to enhanced IGF1 signaling. During cell cycle, ubiquitination and proteasomal degradation are controlled by FZR1. Skeletal muscle, lung, brain, liver, kidney, heart and spleen.

It is found in the cytoplasm. The protein resides in the cytosol. Signaling adapter protein that participates in the signal transduction from two prominent receptor tyrosine kinases, insulin receptor/INSR and insulin-like growth factor I receptor/IGF1R. Plays therefore an important role in development, growth, glucose homeostasis as well as lipid metabolism. Upon phosphorylation by the insulin receptor, functions as a signaling scaffold that propagates insulin action through binding to SH2 domain-containing proteins including the p85 regulatory subunit of PI3K, NCK1, NCK2, GRB2 or SHP2. Recruitment of GRB2 leads to the activation of the guanine nucleotide exchange factor SOS1 which in turn triggers the Ras/Raf/MEK/MAPK signaling cascade. Activation of the PI3K/AKT pathway is responsible for most of insulin metabolic effects in the cell, and the Ras/Raf/MEK/MAPK is involved in the regulation of gene expression and in cooperation with the PI3K pathway regulates cell growth and differentiation. Acts a positive regulator of the Wnt/beta-catenin signaling pathway through suppression of DVL2 autophagy-mediated degradation leading to cell proliferation. Plays a role in cell cycle progression by promoting a robust spindle assembly checkpoint (SAC) during M-phase. In macrophages, IL4-induced tyrosine phosphorylation of IRS2 leads to the recruitment and activation of phosphoinositide 3-kinase (PI3K). The protein is Insulin receptor substrate 2 (Irs2) of Mus musculus (Mouse).